The primary structure comprises 512 residues: tRNA-2-methylthio-N(6)-dimethylallyladenosine synthase (512 aa).

In terms of domain architecture, MTTase N-terminal spans Arg-23–His-139. Cys-32, Cys-68, Cys-102, Cys-176, Cys-180, and Cys-183 together coordinate [4Fe-4S] cluster. One can recognise a Radical SAM core domain in the interval Arg-162–Glu-398. The TRAM domain occupies Arg-401–Ile-469. A disordered region spans residues Ala-477–Cys-512.

The protein belongs to the methylthiotransferase family. MiaB subfamily. In terms of assembly, monomer. It depends on [4Fe-4S] cluster as a cofactor.

The protein resides in the cytoplasm. The enzyme catalyses N(6)-dimethylallyladenosine(37) in tRNA + (sulfur carrier)-SH + AH2 + 2 S-adenosyl-L-methionine = 2-methylsulfanyl-N(6)-dimethylallyladenosine(37) in tRNA + (sulfur carrier)-H + 5'-deoxyadenosine + L-methionine + A + S-adenosyl-L-homocysteine + 2 H(+). In terms of biological role, catalyzes the methylthiolation of N6-(dimethylallyl)adenosine (i(6)A), leading to the formation of 2-methylthio-N6-(dimethylallyl)adenosine (ms(2)i(6)A) at position 37 in tRNAs that read codons beginning with uridine. The polypeptide is tRNA-2-methylthio-N(6)-dimethylallyladenosine synthase (Mycolicibacterium smegmatis (strain ATCC 700084 / mc(2)155) (Mycobacterium smegmatis)).